The chain runs to 552 residues: Phosphoglucomutase (552 aa).

S143 acts as the Phosphoserine intermediate in catalysis. Mg(2+) contacts are provided by S143, D295, D297, and D299.

The protein belongs to the phosphohexose mutase family. Mg(2+) is required as a cofactor.

It catalyses the reaction alpha-D-glucose 1-phosphate = alpha-D-glucose 6-phosphate. Its pathway is glycolipid metabolism; diglucosyl-diacylglycerol biosynthesis. Its function is as follows. Catalyzes the interconversion between glucose-6-phosphate and alpha-glucose-1-phosphate. This is the first step in the biosynthesis of diglucosyl-diacylglycerol (Glc2-DAG), i.e. the predominant glycolipid found in the S.aureus membrane, which is also used as a membrane anchor for lipoteichoic acid (LTA). This is Phosphoglucomutase (pgcA) from Staphylococcus aureus (strain Mu50 / ATCC 700699).